We begin with the raw amino-acid sequence, 223 residues long: Sigma non-opioid intracellular receptor 1 (223 aa).

Topologically, residues 1–9 are lumenal; the sequence is MQWAVGRRW. Positions 2-8 are targeting to endoplasmic reticulum-associated lipid droplets; sequence QWAVGRR. Residues 10 to 30 form a helical membrane-spanning segment; it reads LWVALFLAAVAVLTQIVWLWL. Residues 31–223 lie on the Cytoplasmic side of the membrane; the sequence is GTQNFVFQRE…LTTYLFGQDP (193 aa). Residues 99-106 form an important for ligand-binding region; that stretch reads SLSEYVLL. Residues 177–223 are C-terminal hydrophobic region; the sequence is VIPSTLGFALADTVFSTQDFLTLFYTLRVYARALQLELTTYLFGQDP.

Belongs to the ERG2 family. In terms of assembly, homotrimer. Forms a ternary complex with ANK2 and ITPR3. The complex is disrupted by agonists. Interacts with KCNA4. Interacts with KCNA2; cocaine consumption leads to increased interaction. Interacts with RNF112 in an oxidative stress-regulated manner. Ubiquitously expressed with higher expression in liver, kidney and steroid-producing tissues such as placenta, ovary and adrenal gland.

It localises to the nucleus inner membrane. It is found in the nucleus outer membrane. The protein localises to the nucleus envelope. Its subcellular location is the cytoplasmic vesicle. The protein resides in the endoplasmic reticulum membrane. It localises to the membrane. It is found in the lipid droplet. The protein localises to the cell junction. Its subcellular location is the cell membrane. The protein resides in the cell projection. It localises to the growth cone. It is found in the postsynaptic density membrane. Its function is as follows. Functions in lipid transport from the endoplasmic reticulum and is involved in a wide array of cellular functions probably through regulation of the biogenesis of lipid microdomains at the plasma membrane. Involved in the regulation of different receptors it plays a role in BDNF signaling and EGF signaling. Also regulates ion channels like the potassium channel and could modulate neurotransmitter release. Plays a role in calcium signaling through modulation together with ANK2 of the ITP3R-dependent calcium efflux at the endoplasmic reticulum. Plays a role in several other cell functions including proliferation, survival and death. Originally identified for its ability to bind various psychoactive drugs it is involved in learning processes, memory and mood alteration. Necessary for proper mitochondrial axonal transport in motor neurons, in particular the retrograde movement of mitochondria. Plays a role in protecting cells against oxidative stress-induced cell death via its interaction with RNF112. This Cavia porcellus (Guinea pig) protein is Sigma non-opioid intracellular receptor 1 (SIGMAR1).